We begin with the raw amino-acid sequence, 218 residues long: Thiopurine S-methyltransferase (218 aa).

Residues tryptophan 10, leucine 45, glutamate 66, and arginine 123 each coordinate S-adenosyl-L-methionine.

This sequence belongs to the class I-like SAM-binding methyltransferase superfamily. TPMT family.

The protein localises to the cytoplasm. It catalyses the reaction S-adenosyl-L-methionine + a thiopurine = S-adenosyl-L-homocysteine + a thiopurine S-methylether.. The protein is Thiopurine S-methyltransferase of Shewanella sp. (strain W3-18-1).